Consider the following 96-residue polypeptide: Interleukin-8 (96 aa).

Residues 1–22 form the signal peptide; that stretch reads MTSKLAIALLATFMLSAALCEA. Arginine 27 carries the post-translational modification Citrulline. 2 disulfide bridges follow: cysteine 34-cysteine 61 and cysteine 36-cysteine 78.

The protein belongs to the intercrine alpha (chemokine CxC) family. As to quaternary structure, homodimer. Interacts with TNFAIP6 (via Link domain); this interaction interferes with chemokine binding to glycosaminoglycans. Post-translationally, citrullination at Arg-27 prevents proteolysis, and dampens tissue inflammation, it also enhances leukocytosis, possibly through impaired chemokine clearance from the blood circulation.

The protein resides in the secreted. Its function is as follows. Chemotactic factor that mediates inflammatory response by attracting neutrophils, basophils, and T-cells to clear pathogens and protect the host from infection. Also plays an important role in neutrophil activation. Released in response to an inflammatory stimulus, exerts its effect by binding to the G-protein-coupled receptors CXCR1 and CXCR2, primarily found in neutrophils, monocytes and endothelial cells. G-protein heterotrimer (alpha, beta, gamma subunits) constitutively binds to CXCR1/CXCR2 receptor and activation by IL8 leads to beta and gamma subunits release from Galpha (GNAI2 in neutrophils) and activation of several downstream signaling pathways including PI3K and MAPK pathways. This Dasypus novemcinctus (Nine-banded armadillo) protein is Interleukin-8 (CXCL8).